The following is a 617-amino-acid chain: Proline--tRNA ligase (617 aa).

The protein belongs to the class-II aminoacyl-tRNA synthetase family. ProS type 1 subfamily. Homodimer.

The protein localises to the cytoplasm. It carries out the reaction tRNA(Pro) + L-proline + ATP = L-prolyl-tRNA(Pro) + AMP + diphosphate. Catalyzes the attachment of proline to tRNA(Pro) in a two-step reaction: proline is first activated by ATP to form Pro-AMP and then transferred to the acceptor end of tRNA(Pro). As ProRS can inadvertently accommodate and process non-cognate amino acids such as alanine and cysteine, to avoid such errors it has two additional distinct editing activities against alanine. One activity is designated as 'pretransfer' editing and involves the tRNA(Pro)-independent hydrolysis of activated Ala-AMP. The other activity is designated 'posttransfer' editing and involves deacylation of mischarged Ala-tRNA(Pro). The misacylated Cys-tRNA(Pro) is not edited by ProRS. This is Proline--tRNA ligase from Streptococcus agalactiae serotype Ia (strain ATCC 27591 / A909 / CDC SS700).